The following is a 427-amino-acid chain: 3-phosphoshikimate 1-carboxyvinyltransferase (427 aa).

Positions 22, 23, and 27 each coordinate 3-phosphoshikimate. Lys-22 contacts phosphoenolpyruvate. Phosphoenolpyruvate contacts are provided by Gly-96 and Arg-124. Residues Ser-170, Ser-171, Gln-172, Ser-198, Asp-313, Asn-336, and Lys-340 each contribute to the 3-phosphoshikimate site. Gln-172 provides a ligand contact to phosphoenolpyruvate. Asp-313 serves as the catalytic Proton acceptor. The phosphoenolpyruvate site is built by Arg-344, Arg-386, and Lys-411.

It belongs to the EPSP synthase family. Monomer.

It localises to the cytoplasm. The enzyme catalyses 3-phosphoshikimate + phosphoenolpyruvate = 5-O-(1-carboxyvinyl)-3-phosphoshikimate + phosphate. The protein operates within metabolic intermediate biosynthesis; chorismate biosynthesis; chorismate from D-erythrose 4-phosphate and phosphoenolpyruvate: step 6/7. In terms of biological role, catalyzes the transfer of the enolpyruvyl moiety of phosphoenolpyruvate (PEP) to the 5-hydroxyl of shikimate-3-phosphate (S3P) to produce enolpyruvyl shikimate-3-phosphate and inorganic phosphate. This is 3-phosphoshikimate 1-carboxyvinyltransferase from Aeromonas salmonicida (strain A449).